The sequence spans 271 residues: 5-amino-6-(5-phospho-D-ribitylamino)uracil phosphatase YbjI (271 aa).

The Nucleophile role is filled by D9. D9 lines the Mg(2+) pocket. M10 is a phosphate binding site. D11 provides a ligand contact to Mg(2+). Residues 44–45 (SG) and K192 each bind phosphate. D215 is a binding site for Mg(2+). N218 is a binding site for phosphate.

The protein belongs to the HAD-like hydrolase superfamily. Cof family. Mg(2+) is required as a cofactor. Requires Mn(2+) as cofactor. The cofactor is Co(2+). It depends on Zn(2+) as a cofactor.

The enzyme catalyses 5-amino-6-(5-phospho-D-ribitylamino)uracil + H2O = 5-amino-6-(D-ribitylamino)uracil + phosphate. Its pathway is cofactor biosynthesis; riboflavin biosynthesis; 5-amino-6-(D-ribitylamino)uracil from GTP: step 4/4. Functionally, catalyzes the dephosphorylation of 5-amino-6-(5-phospho-D-ribitylamino)uracil, and thus could be involved in the riboflavin biosynthesis pathway. Is also able to dephosphorylate flavin mononucleotide (FMN), erythrose 4-phosphate and other phosphoric acid esters. The polypeptide is 5-amino-6-(5-phospho-D-ribitylamino)uracil phosphatase YbjI (ybjI) (Escherichia coli (strain K12)).